A 457-amino-acid chain; its full sequence is MSEQQIDWDLALIQKYNYSGPRYTSYPTALEFSEDFEDAAFLQAVARYPERPLSLYVHIPFCHKLCYFCGCNKIVTRQQHKADQYLDALEQEIRHRAPLFADRHVSQLHWGGGTPTYLNKAQISRLMTLLRENFHFNTDAEISIEVDPREIELDVLDHLRAEGFNRLSMGVQDFNKEVQRLVNREQDEEFIFALLNHARDIGFTSTNIDLIYGLPKQTPESFAFTLKRVTELNPDRLSVFNYAHLPTLFAAQRKIKDADLPSAQQKLDILQETIVSLTQAGYQFIGMDHFARPDDELAVAQREGVLHRNFQGYTTQGDTDLLGMGVSAISMIGDGYMQNQKELKRYYQQVDERGNALWRGITLTRDDCIRRDVIKALICNFRLDFNAVEQQWGLHFAEYFAEDLQLLSPLAKDGLVDISEKGIQVTAKGRLLIRNICMCFDAYLRQKARMQQFSRVI.

In terms of domain architecture, Radical SAM core spans 47–280; it reads RYPERPLSLY…QETIVSLTQA (234 aa). Y56 lines the S-adenosyl-L-methionine pocket. Residues C62 and C66 each contribute to the [4Fe-4S] cluster site. S-adenosyl-L-methionine is bound at residue F68. [4Fe-4S] cluster is bound at residue C69. Residues G112, 113–114, E145, Q172, R184, D209, A243, and I329 contribute to the S-adenosyl-L-methionine site; that span reads GT.

The protein belongs to the anaerobic coproporphyrinogen-III oxidase family. As to quaternary structure, monomer. The cofactor is [4Fe-4S] cluster.

It is found in the cytoplasm. It carries out the reaction coproporphyrinogen III + 2 S-adenosyl-L-methionine = protoporphyrinogen IX + 2 5'-deoxyadenosine + 2 L-methionine + 2 CO2. Its pathway is porphyrin-containing compound metabolism; protoporphyrin-IX biosynthesis; protoporphyrinogen-IX from coproporphyrinogen-III (AdoMet route): step 1/1. In terms of biological role, involved in the heme biosynthesis. Catalyzes the anaerobic oxidative decarboxylation of propionate groups of rings A and B of coproporphyrinogen III to yield the vinyl groups in protoporphyrinogen IX. In Salmonella typhi, this protein is Oxygen-independent coproporphyrinogen III oxidase (hemN).